We begin with the raw amino-acid sequence, 327 residues long: Auxin-responsive protein IAA18 (327 aa).

Disordered stretches follow at residues 26 to 45 (VKEADGEGSRNTNLDADEDK), 52 to 98 (GLPG…IGTT), and 180 to 202 (NLTNGSSFKQSPERQNDEADDKA). Residues 49 to 53 (LKLGL) carry the EAR-like (transcriptional repression) motif. Residues 58-69 (QEERAADSREKI) are compositionally biased toward basic and acidic residues. The segment covering 70–82 (QQQQRESSSEPSI) has biased composition (low complexity). Residues 180–189 (NLTNGSSFKQ) are compositionally biased toward polar residues. The segment covering 190–202 (SPERQNDEADDKA) has biased composition (basic and acidic residues). One can recognise a PB1 domain in the interval 209-313 (RPLVKINMDG…TVKRLRVMRR (105 aa)).

Belongs to the Aux/IAA family. Homodimers and heterodimers. In terms of tissue distribution, highly expressed in flowers. Expressed in roots and etiolated seedlings.

Its subcellular location is the nucleus. Aux/IAA proteins are short-lived transcriptional factors that function as repressors of early auxin response genes at low auxin concentrations. This chain is Auxin-responsive protein IAA18 (IAA18), found in Oryza sativa subsp. japonica (Rice).